A 614-amino-acid polypeptide reads, in one-letter code: Zinc finger and SCAN domain-containing protein 2 (614 aa).

2 disordered regions span residues 1-26 and 43-76; these read MMAA…EDRQ and EAVL…PQGA. An SCAN box domain is found at 59 to 132; sequence SAGKGGPQEE…ALVEDLTQTL (74 aa). C2H2-type zinc fingers lie at residues 222–244, 250–272, 278–300, 306–328, 334–356, 362–384, 390–412, 418–440, 446–468, 474–496, 502–524, 530–552, 558–580, and 586–608; these read YECP…ERTH, YKCD…QTTH, YKCR…QRIH, FQCA…QRTH, YSCP…QGIH, YECK…QRIH, YKCT…RRTH, YQCS…RRTH, YKCG…QGMH, YECL…QRIH, YKCS…QRTH, YKCL…QRAH, YRCP…QRIH, and YKCP…QRTH.

It belongs to the krueppel C2H2-type zinc-finger protein family.

It is found in the nucleus. In terms of biological role, may be involved in transcriptional regulation during the post-meiotic stages of spermatogenesis. The chain is Zinc finger and SCAN domain-containing protein 2 (ZSCAN2) from Homo sapiens (Human).